The chain runs to 519 residues: Baeyer-Villiger monooxygenase (519 aa).

Residues Glu41, 49–52 (TWRD), Asp61, Tyr67, and Val110 each bind FAD. Residue 59 to 61 (ACD) coordinates NADP(+). NADP(+) contacts are provided by residues 183–189 (TGASAIQ), 206–207 (RT), and 292–293 (KR). Met399 is an FAD binding site. The disordered stretch occupies residues 499–519 (GAKAAEADTGADTGADAEVSA).

Belongs to the FAD-binding monooxygenase family. Requires FAD as cofactor.

Catalyzes a Baeyer-Villiger oxidation reaction, i.e. the insertion of an oxygen atom into a carbon-carbon bond adjacent to a carbonyl, which converts ketones to esters or lactones using NADPH and/or NADH as an electron donor. Thus, can convert bicyclo[3.2.0]hept-2-en-6-one into the oxidative lactone products 2-oxabicyclo[3.3.0]oct-6-en-3-one and 3-oxabicyclo[3.3.0]oct-6-en-2-one. Is also able to catalyze the sulfoxidation of methyl phenyl sulfide (thioanisole). In Streptomyces coelicolor (strain ATCC BAA-471 / A3(2) / M145), this protein is Baeyer-Villiger monooxygenase.